Reading from the N-terminus, the 832-residue chain is Envelope glycoprotein gp160 (832 aa).

The first 31 residues, 1-31 (MRVRGMQRNWQHLGKWGLLFLGILIICNAAD), serve as a signal peptide directing secretion. At 32–660 (NLWVTVYYGV…ISNWLWYIKI (629 aa)) the chain is on the extracellular side. Cys53 and Cys73 form a disulfide bridge. N-linked (GlcNAc...) asparagine; by host glycans are attached at residues Asn87, Asn129, Asn132, Asn135, Asn146, Asn150, Asn177, Asn178, Asn188, Asn225, Asn232, Asn253, Asn267, Asn280, Asn286, Asn292, Asn322, Asn329, Asn345, and Asn352. Disulfide bonds link Cys118–Cys196, Cys125–Cys187, Cys130–Cys147, Cys209–Cys238, and Cys219–Cys230. A V1 region spans residues 130-146 (CTNATNNSQEKPGAMQN). The tract at residues 147–187 (CSFNMTTEVRDKKLKLSALFYRLDIVPIGNNNSSEYRLINC) is V2. Residues 287–320 (CTRPNNNTRKGIHLGPGQTFYATGAIIGDIRKAH) form a V3 region. Cysteines 287 and 321 form a disulfide. A CD4-binding loop region spans residues 354-364 (SSGGDLEITMH). Cystine bridges form between Cys368-Cys422 and Cys375-Cys395. Residues 375-395 (CDTSGLFNDTGSNNGTITLPC) form a V4 region. N-linked (GlcNAc...) asparagine; by host glycans are attached at residues Asn382, Asn388, Asn419, Asn425, and Asn437. The V5 stretch occupies residues 438-447 (ESNIETFRPE). The fusion peptide stretch occupies residues 488–508 (AAGLGALFLGFLGDSREHMGA). Residues 550–568 (KQLQARVLAVERYLKDQQL) form an immunosuppression region. A disulfide bond links Cys574 and Cys580. N-linked (GlcNAc...) asparagine; by host glycosylation is found at Asn587, Asn592, Asn601, and Asn613. A coiled-coil region spans residues 609 to 643 (KEISNYSNIIYKLIEESQNQQEKNEQELLALDKWA). Residues 638 to 659 (ALDKWASLWNWFDISNWLWYIK) are MPER; binding to GalCer. The chain crosses the membrane as a helical span at residues 661-681 (FIMIVGGLIGLRIVFAVLSIV). Topologically, residues 682 to 832 (NRVRKGYSPL…IRQGAERALL (151 aa)) are cytoplasmic. Positions 688–691 (YSPL) match the YXXL motif; contains endocytosis signal motif. The segment at 695-717 (TLIPSPRGPDRPEGIEEGGGEQG) is disordered. Cys740 carries S-palmitoyl cysteine; by host lipidation. Residues 831 to 832 (LL) carry the Di-leucine internalization motif motif.

The protein belongs to the HIV-1 env protein family. The mature envelope protein (Env) consists of a homotrimer of non-covalently associated gp120-gp41 heterodimers. The resulting complex protrudes from the virus surface as a spike. There seems to be as few as 10 spikes on the average virion. Interacts with host CD4, CCR5 and CXCR4. Gp120 also interacts with the C-type lectins CD209/DC-SIGN and CLEC4M/DC-SIGNR (collectively referred to as DC-SIGN(R)). Gp120 and gp41 interact with GalCer. Gp120 interacts with host ITGA4/ITGB7 complex; on CD4+ T-cells, this interaction results in rapid activation of integrin ITGAL/LFA-1, which facilitates efficient cell-to-cell spreading of HIV-1. Gp120 interacts with cell-associated heparan sulfate; this interaction increases virus infectivity on permissive cells and may be involved in infection of CD4- cells. As to quaternary structure, the mature envelope protein (Env) consists of a homotrimer of non-covalently associated gp120-gp41 heterodimers. The resulting complex protrudes from the virus surface as a spike. There seems to be as few as 10 spikes on the average virion. Post-translationally, highly glycosylated by host. The high number of glycan on the protein is reffered to as 'glycan shield' because it contributes to hide protein sequence from adaptive immune system. Palmitoylation of the transmembrane protein and of Env polyprotein (prior to its proteolytic cleavage) is essential for their association with host cell membrane lipid rafts. Palmitoylation is therefore required for envelope trafficking to classical lipid rafts, but not for viral replication. In terms of processing, specific enzymatic cleavages in vivo yield mature proteins. Envelope glycoproteins are synthesized as an inactive precursor that is heavily N-glycosylated and processed likely by host cell furin in the Golgi to yield the mature SU and TM proteins. The cleavage site between SU and TM requires the minimal sequence [KR]-X-[KR]-R. About 2 of the 9 disulfide bonds of gp41 are reduced by P4HB/PDI, following binding to CD4 receptor.

The protein localises to the virion membrane. It localises to the host cell membrane. Its subcellular location is the host endosome membrane. In terms of biological role, oligomerizes in the host endoplasmic reticulum into predominantly trimers. In a second time, gp160 transits in the host Golgi, where glycosylation is completed. The precursor is then proteolytically cleaved in the trans-Golgi and thereby activated by cellular furin or furin-like proteases to produce gp120 and gp41. Attaches the virus to the host lymphoid cell by binding to the primary receptor CD4. This interaction induces a structural rearrangement creating a high affinity binding site for a chemokine coreceptor like CXCR4 and/or CCR5. Acts as a ligand for CD209/DC-SIGN and CLEC4M/DC-SIGNR, which are respectively found on dendritic cells (DCs), and on endothelial cells of liver sinusoids and lymph node sinuses. These interactions allow capture of viral particles at mucosal surfaces by these cells and subsequent transmission to permissive cells. HIV subverts the migration properties of dendritic cells to gain access to CD4+ T-cells in lymph nodes. Virus transmission to permissive T-cells occurs either in trans (without DCs infection, through viral capture and transmission), or in cis (following DCs productive infection, through the usual CD4-gp120 interaction), thereby inducing a robust infection. In trans infection, bound virions remain infectious over days and it is proposed that they are not degraded, but protected in non-lysosomal acidic organelles within the DCs close to the cell membrane thus contributing to the viral infectious potential during DCs' migration from the periphery to the lymphoid tissues. On arrival at lymphoid tissues, intact virions recycle back to DCs' cell surface allowing virus transmission to CD4+ T-cells. Functionally, acts as a class I viral fusion protein. Under the current model, the protein has at least 3 conformational states: pre-fusion native state, pre-hairpin intermediate state, and post-fusion hairpin state. During fusion of viral and target intracellular membranes, the coiled coil regions (heptad repeats) assume a trimer-of-hairpins structure, positioning the fusion peptide in close proximity to the C-terminal region of the ectodomain. The formation of this structure appears to drive apposition and subsequent fusion of viral and target cell membranes. Complete fusion occurs in host cell endosomes and is dynamin-dependent, however some lipid transfer might occur at the plasma membrane. The virus undergoes clathrin-dependent internalization long before endosomal fusion, thus minimizing the surface exposure of conserved viral epitopes during fusion and reducing the efficacy of inhibitors targeting these epitopes. Membranes fusion leads to delivery of the nucleocapsid into the cytoplasm. This is Envelope glycoprotein gp160 from Human immunodeficiency virus type 1 group M subtype F1 (isolate VI850) (HIV-1).